The following is a 342-amino-acid chain: Hypoxia responsive morphology factor C (342 aa).

Positions 46–68 match the Bipartite nuclear localization signal motif; the sequence is RMKIPRRKSEYSSHDRLKRARKI. Residues 151–181 are RNA recognition motif (RRM)-like domain; sequence ADDAWAYNAADMDTAVKFFSEAIYKAIESSP.

Belongs to the hrmA family.

It is found in the nucleus. In terms of biological role, probably modulates the generation of the hypoxia-typic morphotype (called H-MORPH) with altered biofilm architecture that leads to increased host inflammation, rapid disease progression, and mortality in a murine model of invasive aspergillosis. The polypeptide is Hypoxia responsive morphology factor C (Aspergillus fumigatus (strain CBS 144.89 / FGSC A1163 / CEA10) (Neosartorya fumigata)).